The primary structure comprises 182 residues: uncharacterized protein (182 aa).

The next 2 membrane-spanning stretches (helical) occupy residues 29-49 and 63-83; these read IISG…AGLP and FYFP…MLTL.

It localises to the cell membrane. This is an uncharacterized protein from Ureaplasma parvum serovar 3 (strain ATCC 700970).